The chain runs to 1199 residues: Nucleolar protein 6 (1199 aa).

Residues 1–10 (MLRNKRKAGK) show a composition bias toward basic residues. 2 disordered regions span residues 1 to 51 (MLRN…EPKP) and 1146 to 1199 (KREQ…KALK). 2 stretches are compositionally biased toward basic and acidic residues: residues 28–37 (HAEDHSDLEH) and 1146–1169 (KREQ…EKST).

Belongs to the NRAP family. In terms of assembly, part of the small subunit (SSU) processome, composed of more than 70 proteins and the RNA chaperone small nucleolar RNA (snoRNA) U3.

The protein resides in the nucleus. The protein localises to the nucleolus. Its subcellular location is the chromosome. In terms of biological role, part of the small subunit (SSU) processome, first precursor of the small eukaryotic ribosomal subunit. During the assembly of the SSU processome in the nucleolus, many ribosome biogenesis factors, an RNA chaperone and ribosomal proteins associate with the nascent pre-rRNA and work in concert to generate RNA folding, modifications, rearrangements and cleavage as well as targeted degradation of pre-ribosomal RNA by the RNA exosome. This Drosophila yakuba (Fruit fly) protein is Nucleolar protein 6.